The sequence spans 461 residues: MIQPDSYVRSLLKRSPGESVTARGWVKTRRDSKNVHFIQLNDGSSPVDLQVVLDAGVVPEDVVAKITTGACISVEGDLVASMGKGQAVEIKARALTVHGTADPEHYPLQKKKHTLETLRELGHLRTRSNTFGAVFRVRNALACAIHKFFQDRGFMYVHTPVISASDAEGAGSMFQVTTLDLQSPKPADFTGDFFGKHTYLTVSGQLEAEIFAHAFANVYTFGPTFRAENSNTPRHLAEFYMIEPEMAFCDLKDNQDLAEAFLKSQVEYVVNACGPDLDFLAKWYDPELRKTLDGLMNASFERITYTEAIDLLQRSGRSFEFPTQWGSDMQSEHERYLTEEVFNKPVIVTDYPKDIKAFYMRGNDDGKTVAAMDVLAPRIGEIIGGSQREERHDVLLQRIREMAAHGLREEAYWWYLDLRRFGGVEHAGFGMGFERMLMYLTGMKNIRDVIPFPRTPGNAEF.

Belongs to the class-II aminoacyl-tRNA synthetase family. Homodimer.

It is found in the cytoplasm. The catalysed reaction is tRNA(Asn) + L-asparagine + ATP = L-asparaginyl-tRNA(Asn) + AMP + diphosphate + H(+). The chain is Asparagine--tRNA ligase from Solibacter usitatus (strain Ellin6076).